The primary structure comprises 542 residues: Nibrin homolog (542 aa).

In terms of domain architecture, FHA spans Y25–G90. One can recognise a BRCT domain in the interval I119–M195. Positions S409–D430 are disordered. The segment at V465–V500 is involved in MRE11-binding.

This sequence belongs to the Nibrin family. As to quaternary structure, component of the MRN complex composed of two heterodimers RAD50 and MRE11 associated with a single NBS1.

Its subcellular location is the nucleus. It localises to the chromosome. Component of the MRN complex, which plays a central role in double-strand break (DSB) repair, DNA recombination, maintenance of telomere integrity and meiosis. The MRN complex is involved in the repair of DNA double-strand breaks (DSBs) via homologous recombination (HR), an error-free mechanism which primarily occurs during S and G2 phases. The complex (1) mediates the end resection of damaged DNA, which generates proper single-stranded DNA, a key initial steps in HR, and is (2) required for the recruitment of other repair factors and efficient activation of ATM and ATR upon DNA damage. The MRN complex possesses single-strand endonuclease activity and double-strand-specific 3'-5' exonuclease activity, which are provided by MRE11, to initiate end resection, which is required for single-strand invasion and recombination. Within the MRN complex, NBS1 acts as a protein-protein adapter, which specifically recognizes and binds phosphorylated proteins, promoting their recruitment to DNA damage sites. Recruits MRE11 and RAD50 components of the MRN complex to DSBs in response to DNA damage. This Arabidopsis thaliana (Mouse-ear cress) protein is Nibrin homolog.